The primary structure comprises 62 residues: Teretoxin Tan1.1 (62 aa).

The N-terminal stretch at 1–21 is a signal peptide; it reads MSCFPVLFVMMLLVSQSVWAF. Residues 22-38 constitute a propeptide that is removed on maturation; the sequence is PGPETRDGSVQDAESRR.

This sequence belongs to the teretoxin A (TA) superfamily. In terms of processing, contains 2 disulfide bonds. In terms of tissue distribution, expressed by the venom duct.

It is found in the secreted. The chain is Teretoxin Tan1.1 from Terebra anilis (Auger snail).